The following is a 185-amino-acid chain: Lysine-rich arabinogalactan protein 17 (185 aa).

A signal peptide spans 1 to 21 (MTRNILLTVTLICIVFITVGG). The disordered stretch occupies residues 25–160 (ATAPIHSPST…FSPAADDQSG (136 aa)). Residues 43–68 (SPAISPAAPTPESTEAPAKTPVEAPV) show a composition bias toward low complexity. Residues 69-88 (EAPPSPTPASTPQISPPAPS) are compositionally biased toward pro residues. Residues 111–122 (TKHKKKTKKHKT) are compositionally biased toward basic residues. The span at 135-146 (PPAPPGEAPGPG) shows a compositional bias: pro residues. Residue S159 is the site of GPI-anchor amidated serine attachment. Residues 160-185 (GAQRISVVIQMVGAAAIAWSLLVLAF) constitute a propeptide, removed in mature form.

It belongs to the lysine-rich AGP family. In terms of processing, O-glycosylated on the hydroxyproline residues. As to expression, predominantly expressed in open flowers. Also expressed in leaves and stems, and at a lower level in roots.

Its subcellular location is the cell membrane. Its function is as follows. Proteoglycan that seems to be implicated in diverse developmental roles such as differentiation, cell-cell recognition, embryogenesis and programmed cell death. This Arabidopsis thaliana (Mouse-ear cress) protein is Lysine-rich arabinogalactan protein 17 (AGP17).